The chain runs to 273 residues: Large ribosomal subunit protein uL2cy (273 aa).

Disordered regions lie at residues 1–22 and 224–273; these read MAIHLYKTSTPSTRNGAVDSQV and NPVD…RRRK.

Belongs to the universal ribosomal protein uL2 family. Part of the 50S ribosomal subunit.

It is found in the plastid. It localises to the chloroplast. This Chloranthus spicatus (Chulantree) protein is Large ribosomal subunit protein uL2cy (rpl2-B).